Here is a 21-residue protein sequence, read N- to C-terminus: Fibrinogen beta chain (21 aa).

Residue Gln1 is modified to Pyrrolidone carboxylic acid. Sulfotyrosine is present on Tyr6.

As to quaternary structure, heterohexamer; disulfide linked. Contains 2 sets of 3 non-identical chains (alpha, beta and gamma). The 2 heterotrimers are in head to head conformation with the N-termini in a small central domain. In terms of processing, conversion of fibrinogen to fibrin is triggered by thrombin, which cleaves fibrinopeptides A and B from alpha and beta chains, and thus exposes the N-terminal polymerization sites responsible for the formation of the soft clot.

The protein resides in the secreted. Functionally, cleaved by the protease thrombin to yield monomers which, together with fibrinogen alpha (FGA) and fibrinogen gamma (FGG), polymerize to form an insoluble fibrin matrix. Fibrin has a major function in hemostasis as one of the primary components of blood clots. In addition, functions during the early stages of wound repair to stabilize the lesion and guide cell migration during re-epithelialization. Was originally thought to be essential for platelet aggregation, based on in vitro studies using anticoagulated blood. However subsequent studies have shown that it is not absolutely required for thrombus formation in vivo. Enhances expression of SELP in activated platelets. Maternal fibrinogen is essential for successful pregnancy. Fibrin deposition is also associated with infection, where it protects against IFNG-mediated hemorrhage. May also facilitate the antibacterial immune response via both innate and T-cell mediated pathways. The chain is Fibrinogen beta chain (FGB) from Rangifer tarandus (Reindeer).